Reading from the N-terminus, the 377-residue chain is Erythronate-4-phosphate dehydrogenase (377 aa).

Substrate-binding residues include Ser-45 and Thr-67. NAD(+) is bound by residues Asp-147, 210 to 212 (ASR), and Asp-236. Residue Arg-212 is part of the active site. Glu-241 is a catalytic residue. His-258 acts as the Proton donor in catalysis. Gly-261 provides a ligand contact to NAD(+). Substrate is bound at residue Tyr-262.

This sequence belongs to the D-isomer specific 2-hydroxyacid dehydrogenase family. PdxB subfamily. As to quaternary structure, homodimer.

The protein resides in the cytoplasm. It carries out the reaction 4-phospho-D-erythronate + NAD(+) = (R)-3-hydroxy-2-oxo-4-phosphooxybutanoate + NADH + H(+). It participates in cofactor biosynthesis; pyridoxine 5'-phosphate biosynthesis; pyridoxine 5'-phosphate from D-erythrose 4-phosphate: step 2/5. In terms of biological role, catalyzes the oxidation of erythronate-4-phosphate to 3-hydroxy-2-oxo-4-phosphonooxybutanoate. In Aeromonas salmonicida (strain A449), this protein is Erythronate-4-phosphate dehydrogenase.